We begin with the raw amino-acid sequence, 339 residues long: Vomeronasal type-1 receptor A14 (339 aa).

The Extracellular segment spans residues 1 to 42; sequence MMGVQICQGMMSEIPFFSPPPQFSYMMNKNIRLHTDSNIRNT. The helical transmembrane segment at 43–63 threads the bilayer; the sequence is FFTDIGIGISANSLLLLFNIF. Over 64 to 75 the chain is Cytoplasmic; that stretch reads KLTRGQRSRLTD. A helical membrane pass occupies residues 76 to 96; the sequence is LPIGLLSLINLLMLLMAAFIA. At 97-119 the chain is on the extracellular side; that stretch reads TDTFISWKGWDDIICKFLVYLYR. A disulfide bridge connects residues Cys111 and Cys198. A helical membrane pass occupies residues 120–140; it reads TFRGLSLCTSCLLSVLQAIIL. Residues 141 to 160 lie on the Cytoplasmic side of the membrane; the sequence is SPRSSCLAKFKHKPPHHISC. A helical transmembrane segment spans residues 161–181; the sequence is AILSLSVLYMFIGSHLLVSII. Residues 182-213 lie on the Extracellular side of the membrane; the sequence is ATPNLTTNDFIHVTQSCSILPMSYLMQCMFST. An N-linked (GlcNAc...) asparagine glycan is attached at Asn185. The helical transmembrane segment at 214 to 234 threads the bilayer; the sequence is LLAIRDVFLISLMVLSTWYMV. Residues 235–264 lie on the Cytoplasmic side of the membrane; the sequence is ALLCRHRKQTRHLQGTSLSPKASPEQRATR. Residues 265–285 form a helical membrane-spanning segment; the sequence is SILMLMSLFVLMSVFDSIVCS. At 286 to 296 the chain is on the extracellular side; the sequence is SRTMYLNDPIS. Residues 297-317 form a helical membrane-spanning segment; the sequence is YSIQLFMVHIYATVSPFVFIV. Residues 318–339 lie on the Cytoplasmic side of the membrane; it reads TEKHIVNFLRSVCEGDECLNIH.

Belongs to the G-protein coupled receptor 1 family.

It localises to the cell membrane. In terms of biological role, putative pheromone receptor implicated in the regulation of social as well as reproductive behavior. In Rattus norvegicus (Rat), this protein is Vomeronasal type-1 receptor A14.